Consider the following 489-residue polypeptide: MESTFSSPAEAALQREAGVPGQFTPPEDLDRVYELERVTKFVCDLGCQRVTLQFPDQLLGDAGAVAARLEEVTGAKMFILGDTAYGSCCVDVLGAEQAGAQALVHFGPACLSPPASQLPITFVLGQRPVALELCAKAFEAQNPDPTAPVVLLSEPACAHALEPLAMLLLPKYQDLLISRPALPLPVGSPSSQPESLERFGRCFPLNPGRRLEEYGAFYVGASQASSDSSLDPDLSRLLLGWTPGRPFFSCCPDTGQTQDQGAKAGRLRARRLYLIERARDARVVGLLAGTLGVARHREALAHLRKLTEAAGKRSYVLAVGKPTPAKLANFPEMDVFVLLACPLGALAPQPSGGFFRPVLTPCELEAACNPAWPPPGLAPHLTHYAELLPGSPFHVPLPPPESELWDTPDVSLISGELRPPPPWKSSDDTRCSALIPRPQLELAESSPAASFLSSRNWQGLEPRLGQTPVKEAVRGRRGIAIAYEDEGSS.

M1 carries the post-translational modification N-acetylmethionine. Phosphoserine is present on S7. The [4Fe-4S] cluster site is built by C89, C110, and C341. A Phosphoserine modification is found at S446. T467 is subject to Phosphothreonine. Position 488 is a phosphoserine (S488).

This sequence belongs to the DPH1/DPH2 family. DPH2 subfamily. In terms of assembly, component of the 2-(3-amino-3-carboxypropyl)histidine synthase complex composed of DPH1, DPH2, DPH3 and a NADH-dependent reductase. Interacts with DPH1. [4Fe-4S] cluster serves as cofactor.

Its pathway is protein modification; peptidyl-diphthamide biosynthesis. Its function is as follows. Required for the first step of diphthamide biosynthesis, a post-translational modification of histidine which occurs in elongation factor 2. DPH1 and DPH2 transfer a 3-amino-3-carboxypropyl (ACP) group from S-adenosyl-L-methionine (SAM) to a histidine residue, the reaction is assisted by a reduction system comprising DPH3 and a NADH-dependent reductase. Facilitates the reduction of the catalytic iron-sulfur cluster found in the DPH1 subunit. This is 2-(3-amino-3-carboxypropyl)histidine synthase subunit 2 (Dph2) from Mus musculus (Mouse).